The primary structure comprises 142 residues: Large ribosomal subunit protein uL11 (142 aa).

This sequence belongs to the universal ribosomal protein uL11 family. Part of the ribosomal stalk of the 50S ribosomal subunit. Interacts with L10 and the large rRNA to form the base of the stalk. L10 forms an elongated spine to which L12 dimers bind in a sequential fashion forming a multimeric L10(L12)X complex. In terms of processing, one or more lysine residues are methylated.

Forms part of the ribosomal stalk which helps the ribosome interact with GTP-bound translation factors. The sequence is that of Large ribosomal subunit protein uL11 from Mycobacterium sp. (strain JLS).